A 137-amino-acid chain; its full sequence is uncharacterized protein (137 aa).

Positions 1-26 (MKDKMWCEDTAQPHRRLPAPPSSSSP) are disordered.

This is an uncharacterized protein from Homo sapiens (Human).